The chain runs to 488 residues: Erythromycin resistance ATP-binding protein MsrA (488 aa).

The 194-residue stretch at 6 to 199 (IKFNQINHKL…NQYEQEQLEQ (194 aa)) folds into the ABC transporter 1 domain. 38–45 (GGNGTGKT) contacts ATP. The tract at residues 200-298 (QRKYEQYISE…KIYDIHNNYP (99 aa)) is Q-linker, rich in Glu and hydrophilic AA. The interval 211–255 (QRLSQASKAKRNQAQQMAQASSKQKNKSIAPDRLSASKEKGTVEK) is disordered. A compositionally biased stretch (low complexity) spans 222–233 (NQAQQMAQASSK). Over residues 245–255 (SASKEKGTVEK) the composition is skewed to basic and acidic residues. In terms of domain architecture, ABC transporter 2 spans 299–487 (IIAQNLTLVK…ELTGQSIHDI (189 aa)). Position 331-338 (331-338 (GANGVGKT)) interacts with ATP.

This sequence belongs to the ABC transporter superfamily.

Functionally, confers resistance to 14-membered ring macrolides (like erythromycin) and to B streptogramins, by acting as an ATP-dependent efflux pump. This is Erythromycin resistance ATP-binding protein MsrA (msrA) from Staphylococcus epidermidis.